A 426-amino-acid chain; its full sequence is Probable imidazolonepropionase (426 aa).

4-imidazolone-5-propanoate is bound by residues Y159 and H192. Y159 contributes to the N-formimidoyl-L-glutamate binding site. H260 lines the Fe(3+) pocket. H260 contributes to the Zn(2+) binding site. A 4-imidazolone-5-propanoate-binding site is contributed by E263. D334 serves as a coordination point for Fe(3+). A Zn(2+)-binding site is contributed by D334. Residue N336 participates in N-formimidoyl-L-glutamate binding.

Belongs to the metallo-dependent hydrolases superfamily. HutI family. Zn(2+) serves as cofactor. Requires Fe(3+) as cofactor.

The catalysed reaction is 4-imidazolone-5-propanoate + H2O = N-formimidoyl-L-glutamate. It functions in the pathway amino-acid degradation; L-histidine degradation into L-glutamate; N-formimidoyl-L-glutamate from L-histidine: step 3/3. This chain is Probable imidazolonepropionase (Amdhd1), found in Mus musculus (Mouse).